Consider the following 437-residue polypeptide: GTPase Der (437 aa).

2 consecutive EngA-type G domains span residues 3–167 (NLVA…KKES) and 176–352 (PRFA…ENRM). Residues 9-16 (GRPNVGKS), 56-60 (DTGGW), 119-122 (NKTD), 182-189 (GRPNAGKS), 229-233 (DTAGI), and 294-297 (NKWD) each bind GTP. The 85-residue stretch at 353–437 (IKIPTARLNE…TPINIYIRQK (85 aa)) folds into the KH-like domain.

Belongs to the TRAFAC class TrmE-Era-EngA-EngB-Septin-like GTPase superfamily. EngA (Der) GTPase family. In terms of assembly, associates with the 50S ribosomal subunit.

Functionally, GTPase that plays an essential role in the late steps of ribosome biogenesis. The polypeptide is GTPase Der (Bacteroides fragilis (strain ATCC 25285 / DSM 2151 / CCUG 4856 / JCM 11019 / LMG 10263 / NCTC 9343 / Onslow / VPI 2553 / EN-2)).